The primary structure comprises 227 residues: Phosphoglycolate phosphatase (227 aa).

The active-site Nucleophile is the aspartate 8. Aspartate 8 and aspartate 10 together coordinate Mg(2+). Lysine 152 is a substrate binding site. Residues aspartate 175 and aspartate 179 each contribute to the Mg(2+) site.

The protein belongs to the archaeal SPP-like hydrolase family. The cofactor is Mg(2+).

It catalyses the reaction 2-phosphoglycolate + H2O = glycolate + phosphate. Catalyzes the dephosphorylation of 2-phosphoglycolate. In Halorubrum lacusprofundi (strain ATCC 49239 / DSM 5036 / JCM 8891 / ACAM 34), this protein is Phosphoglycolate phosphatase.